The chain runs to 384 residues: tRNA(Met) cytidine acetate ligase (384 aa).

ATP contacts are provided by residues 7 to 20 (VAEY…HEFL), Gly101, Asn153, and Arg178.

This sequence belongs to the TmcAL family.

The protein localises to the cytoplasm. It catalyses the reaction cytidine(34) in elongator tRNA(Met) + acetate + ATP = N(4)-acetylcytidine(34) in elongator tRNA(Met) + AMP + diphosphate. Functionally, catalyzes the formation of N(4)-acetylcytidine (ac(4)C) at the wobble position of elongator tRNA(Met), using acetate and ATP as substrates. First activates an acetate ion to form acetyladenylate (Ac-AMP) and then transfers the acetyl group to tRNA to form ac(4)C34. The chain is tRNA(Met) cytidine acetate ligase from Lactobacillus delbrueckii subsp. bulgaricus (strain ATCC BAA-365 / Lb-18).